Consider the following 616-residue polypeptide: Elongation factor 4 (616 aa).

Positions 17–203 (ERIRNFCIIA…RVCELVPAPV (187 aa)) constitute a tr-type G domain. Residues 29-34 (DHGKST) and 150-153 (NKID) each bind GTP.

The protein belongs to the TRAFAC class translation factor GTPase superfamily. Classic translation factor GTPase family. LepA subfamily.

The protein resides in the cell membrane. It carries out the reaction GTP + H2O = GDP + phosphate + H(+). In terms of biological role, required for accurate and efficient protein synthesis under certain stress conditions. May act as a fidelity factor of the translation reaction, by catalyzing a one-codon backward translocation of tRNAs on improperly translocated ribosomes. Back-translocation proceeds from a post-translocation (POST) complex to a pre-translocation (PRE) complex, thus giving elongation factor G a second chance to translocate the tRNAs correctly. Binds to ribosomes in a GTP-dependent manner. The chain is Elongation factor 4 from Corynebacterium jeikeium (strain K411).